Reading from the N-terminus, the 860-residue chain is MQEQYRPEEIESKVQLHWDENRTFEVTEDESKEKYYCLSMLPYPSGRLHMGHVRNYTIGDVIARYQRMLGKNVLQPIGWDAFGLPAEGAAVKNNTAPAPWTYDNIAYMKNQLKMLGFGYDWSRELATCTPEYYRWEQKFFTELYKKGLVYKKTSAVNWCPNDQTVLANEQVIDGCCWRCDTKVERKEIPQWFIKITAYADELLNDLDKLDHWPDTVKTMQRNWIGRSEGVEISFDVNDYADKLTVYTTRPDTFMGCTYLAVAAGHPLAQQAAANNPALATFIDECRNTKVAEADMATMEKKGVDTGFKAIHPLTGEEIPVWAANFVLMEYGTGAVMAVPGHDQRDYEFASKYGLNIKPVILAADGSEPDLSEQALTEKGVLFNSGEFSGLDYEAGFNAIADKLAAMGVGERKVNYRLRDWGVSRQRYWGAPIPMVTLEDGTVLPTPEDQLPVILPEDVVMDGITSPIKADPEWAKTTVNGQPALRETDTFDTFMESSWYYARYTCPQYQEGMLDSKAANYWLPVDIYIGGIEHAIMHLLYFRFFHKLMRDAGMVNSDEPAKQLLCQGMVLADAFYYVGENGERNWVSPVDAIVERDEKGRIVKAKDAAGHELVYTGMSKMSKSKNNGIDPQVMVERYGADTVRLFMMFASPADMTLEWQESGVEGANRFLKRVWKLVYEHTTKGEVAALNVAALSEDQKALRRDIHKTIAKVTDDIGRRQTFNTAIAAIMELMNKLAKAPQEDEQDRALMQEALLAVVRMLNPFTPHASFTLWRELNGEGDIDNAPWPVADESAMVEDSTLVVVQVNGKVRGKITVAVDATEEQVRERAGQEHLVAKYLDGKTVRKVIYVPGKLLNLVVG.

The 'HIGH' region motif lies at 42-52; that stretch reads PYPSGRLHMGH. The 'KMSKS' region motif lies at 619–623; sequence KMSKS. Lys-622 contributes to the ATP binding site.

This sequence belongs to the class-I aminoacyl-tRNA synthetase family.

The protein resides in the cytoplasm. The catalysed reaction is tRNA(Leu) + L-leucine + ATP = L-leucyl-tRNA(Leu) + AMP + diphosphate. The polypeptide is Leucine--tRNA ligase (Klebsiella pneumoniae subsp. pneumoniae (strain ATCC 700721 / MGH 78578)).